Consider the following 213-residue polypeptide: Glycerol-3-phosphate acyltransferase (213 aa).

Helical transmembrane passes span Ile-3–Ser-23, Lys-51–Ala-71, Asp-78–Phe-98, Ala-115–Phe-135, and Leu-140–Pro-160.

Belongs to the PlsY family. Probably interacts with PlsX.

It is found in the cell inner membrane. It catalyses the reaction an acyl phosphate + sn-glycerol 3-phosphate = a 1-acyl-sn-glycero-3-phosphate + phosphate. It functions in the pathway lipid metabolism; phospholipid metabolism. Catalyzes the transfer of an acyl group from acyl-phosphate (acyl-PO(4)) to glycerol-3-phosphate (G3P) to form lysophosphatidic acid (LPA). This enzyme utilizes acyl-phosphate as fatty acyl donor, but not acyl-CoA or acyl-ACP. This is Glycerol-3-phosphate acyltransferase from Burkholderia cenocepacia (strain ATCC BAA-245 / DSM 16553 / LMG 16656 / NCTC 13227 / J2315 / CF5610) (Burkholderia cepacia (strain J2315)).